The chain runs to 263 residues: Protein MARD1 (263 aa).

The segment at 219-263 adopts an FLZ-type zinc-finger fold; sequence SFLSRCFTCKKNLDQKQDIYIYRGEKGFCSSECRYQEMLLDQMET.

It belongs to the FLZ family. Interacts with KIN10 and KIN11 via its FLZ-type zinc finger domain. Interacts with KINB1 and KINB2 via its N-terminal part. Interacts with TZF4, TZF5 and TZF6. Interacts with MPK3 and MPK6.

It localises to the cytoplasm. It is found in the stress granule. Its subcellular location is the P-body. Its function is as follows. May act as an adapter to facilitate the interaction of SnRK1 complex with effector proteins, conferring tissue- and stimulus-type specific differences in the SnRK1 regulation pathway. Involved in seed dormancy control. In Arabidopsis thaliana (Mouse-ear cress), this protein is Protein MARD1.